We begin with the raw amino-acid sequence, 143 residues long: Hemoglobin cathodic subunit alpha (143 aa).

Position 2 is an N-acetylserine (Ser-2). One can recognise a Globin domain in the interval 2–143; sequence SLTAKDKSLI…LGAALSDKYR (142 aa). His-60 lines the O2 pocket. His-89 contributes to the heme b binding site.

The protein belongs to the globin family. In terms of assembly, heterotetramer of two alpha chains and two beta chains. In terms of tissue distribution, red blood cells.

Involved in oxygen transport from gills to the various peripheral tissues. The protein is Hemoglobin cathodic subunit alpha of Anguilla anguilla (European freshwater eel).